A 164-amino-acid chain; its full sequence is MMNHKELVLFAVVCLSLYQAVEPSQDVVKDMSLNFRKGLDACKKELNLPDTINSDFNRFWNDDHVVTNRDTGCAIMCLSSKLELVSDTGLHHGNTLEYAKQHGADDTVAQQIVDLLHSCAQAVPDLEDPCLKVLEWAKCFKAEIHKLNWAPSAEVMAAEMLAEV.

The N-terminal stretch at 1–23 (MMNHKELVLFAVVCLSLYQAVEP) is a signal peptide. Intrachain disulfides connect cysteine 42–cysteine 77, cysteine 73–cysteine 130, and cysteine 119–cysteine 139.

This sequence belongs to the PBP/GOBP family. Monomer and disulfide-linked dimers. In terms of tissue distribution, antenna.

This major soluble protein in olfactory sensilla of male moths serves to solubilize the extremely hydrophobic pheromone molecules such as bombykol and to transport pheromone through the aqueous lymph to receptors located on olfactory cilia. The protein is Pheromone-binding protein 2 (PBP) of Epiphyas postvittana (Light brown apple moth).